We begin with the raw amino-acid sequence, 958 residues long: Glycine dehydrogenase (decarboxylating) (958 aa).

K703 is modified (N6-(pyridoxal phosphate)lysine).

This sequence belongs to the GcvP family. The glycine cleavage system is composed of four proteins: P, T, L and H. Pyridoxal 5'-phosphate is required as a cofactor.

The catalysed reaction is N(6)-[(R)-lipoyl]-L-lysyl-[glycine-cleavage complex H protein] + glycine + H(+) = N(6)-[(R)-S(8)-aminomethyldihydrolipoyl]-L-lysyl-[glycine-cleavage complex H protein] + CO2. The glycine cleavage system catalyzes the degradation of glycine. The P protein binds the alpha-amino group of glycine through its pyridoxal phosphate cofactor; CO(2) is released and the remaining methylamine moiety is then transferred to the lipoamide cofactor of the H protein. In Nitrobacter hamburgensis (strain DSM 10229 / NCIMB 13809 / X14), this protein is Glycine dehydrogenase (decarboxylating).